The primary structure comprises 125 residues: Protein JAZ13 (125 aa).

An EAR motif is present at residues 6–10 (LDLHL). Positions 99–125 (KKRSKSFTLTPNYTSSTSSSSSSLHNF) are disordered. Residues 112–125 (TSSTSSSSSSLHNF) show a composition bias toward low complexity.

In terms of assembly, monomer. Lack of homodimerization, and very weak or no interaction with AFPH2/NINJA and other JAZ proteins. Interacts (via EAR motif) with TPL. Interacts (via jas motif) with MYC2. Phosphorylated at multiple serine residues.

Non-TIFY functional repressor of jasmonate (JA)-mediated growth and defense responses. Intrinsically resistant to JA-induced turnover, probably due to the absence of the canonical degron that strongly interacts with COI1 in the presence of JA-Ile in the TIFY/JAZ proteins. This Arabidopsis thaliana (Mouse-ear cress) protein is Protein JAZ13.